Reading from the N-terminus, the 94-residue chain is Long neurotoxin-like OH-31 (94 aa).

Residues 1–19 (MKTLLLTLVVVTILCLDLG) form the signal peptide. 4 disulfides stabilise this stretch: Cys-35–Cys-55, Cys-37–Cys-66, Cys-70–Cys-81, and Cys-82–Cys-87.

It belongs to the three-finger toxin family. Long-chain subfamily. Type II alpha-neurotoxin sub-subfamily. As to expression, expressed by the venom gland.

It localises to the secreted. In terms of biological role, binds with high affinity to muscular nicotinic acetylcholine receptors (nAChRs), whereas it binds with a low affinity to neuronal alpha-7/CHRNA7 nAChRs. This chain is Long neurotoxin-like OH-31, found in Ophiophagus hannah (King cobra).